The chain runs to 323 residues: Viral cathepsin (323 aa).

A signal peptide spans Met-1–Ala-18. The propeptide at Tyr-19 to Gly-112 is activation peptide. Cystine bridges form between Cys-133–Cys-174, Cys-167–Cys-207, and Cys-262–Cys-310. Cys-136 is a catalytic residue. An N-linked (GlcNAc...) asparagine; by host glycan is attached at Asn-158. Catalysis depends on residues His-269 and Asn-289.

It belongs to the peptidase C1 family. Post-translationally, synthesized as an inactive proenzyme and activated by proteolytic removal of the inhibitory propeptide.

The catalysed reaction is Endopeptidase of broad specificity, hydrolyzing substrates of both cathepsin L and cathepsin B.. Its function is as follows. Cysteine protease that plays an essential role in host liquefaction to facilitate horizontal transmission of the virus. May participate in the degradation of foreign protein expressed by the baculovirus system. This Lepidoptera (butterflies and moths) protein is Viral cathepsin (VCATH).